A 358-amino-acid polypeptide reads, in one-letter code: Protein-glutamate methylesterase/protein-glutamine glutaminase (358 aa).

The 118-residue stretch at 5 to 122 folds into the Response regulatory domain; it reads SVLIIDDSAL…RNSLEAYTDE (118 aa). At Asp56 the chain carries 4-aspartylphosphate. The 193-residue stretch at 159-351 folds into the CheB-type methylesterase domain; it reads GISTEKLIII…RRILARLVGA (193 aa). Residues Ser171, His197, and Asp293 contribute to the active site.

This sequence belongs to the CheB family. Phosphorylated by CheA. Phosphorylation of the N-terminal regulatory domain activates the methylesterase activity.

It is found in the cytoplasm. It catalyses the reaction [protein]-L-glutamate 5-O-methyl ester + H2O = L-glutamyl-[protein] + methanol + H(+). The enzyme catalyses L-glutaminyl-[protein] + H2O = L-glutamyl-[protein] + NH4(+). Functionally, involved in chemotaxis. Part of a chemotaxis signal transduction system that modulates chemotaxis in response to various stimuli. Catalyzes the demethylation of specific methylglutamate residues introduced into the chemoreceptors (methyl-accepting chemotaxis proteins or MCP) by CheR. Also mediates the irreversible deamidation of specific glutamine residues to glutamic acid. The protein is Protein-glutamate methylesterase/protein-glutamine glutaminase of Nitrosomonas europaea (strain ATCC 19718 / CIP 103999 / KCTC 2705 / NBRC 14298).